We begin with the raw amino-acid sequence, 405 residues long: Neisseria adhesin A (405 aa).

Positions 1-23 are cleaved as a signal peptide; it reads MKHFPSKVLTTAILATFCSGALA. The head domain stretch occupies residues 24-87; that stretch reads ATNDDDVKKA…ADDFKGLGLK (64 aa). Coiled-coil stretches lie at residues 87–170 and 181–329; these read KKVV…KLEA and AFND…LRKE. The interval 88–350 is coiled stalk domain; sequence KVVTNLTKTV…SGLFQPYNVG (263 aa). Residues 312 to 350 are outer membrane translocation of the passenger domain; the sequence is HDTRLNGLDKTVSDLRKETRQGLAEQAALSGLFQPYNVG. Beta stranded transmembrane passes span 350 to 360, 364 to 375, 382 to 388, and 394 to 405; these read GRFNVTAAVGG, ESAVAIGTGFRF, KAGVAVG, and SAAYHVGVNYEW. A translocator domain region spans residues 351–405; sequence RFNVTAAVGGYKSESAVAIGTGFRFTENFAAKAGVAVGTSSGSSAAYHVGVNYEW.

It belongs to the autotransporter-2 (AT-2) (TC 1.B.40) family. As to quaternary structure, the non-membrane anchored protein (residues 24-350) probably forms a homotrimer; it is assumed the mature protein forms trimers in situ. The mature protein without the membrane-targeting segment (residues 24-350) binds to human heat shock 90 beta protein (HSP90AB1) both in vitro and when incubated with human monocytes. A subsequent paper showed binding of the same fragment in epithelial cells to both HSP90AA1 and HSP90AB1; in vitro the interaction is stabilized by ADP and the Hsp90 inhibitor 17-AAG (17-N-allylamino-17-demethoxygeldanamycin), in vitro and in vivo both interactions are inhibited by ATP. Binds human oxidized low-density lipoprotein receptor 1 (LOX-1, OLR1) in protein microarrays, in solution and when LOX-1 is expressed on the cell surface. Binds via the head and the beginning of the coiled stalk (residues 24-170); binding can be abrogated by monoclonal antibodies against those specific regions of NadA. Other potential binding partners were identified but not characterized in the same study. Forms high molecular weight oligomers in whole cell extracts that are not disrupted by boiling in SDS buffer.

It localises to the cell outer membrane. The protein resides in the cell surface. In terms of biological role, adheres to and induces bacterial uptake by human epithelial cells in a microfilament-dependent process. Binding is reduced by pronase treatment, suggesting there is a protein receptor on the human cells. Possible human protein receptors include integrin beta-1 (ITGB1) and oxidized low-density lipoprotein receptor 1 (OLR1). Binds to extracellular human Hsp90 (preferentially the beta isoform, HSP90AB1) on monocytes, binding stimulates monocytes in a TLR4-dependent fashion, polymixin B, which binds NadA, blocks the activation. Hsp90 is probably not the first receptor on human monocytes. Non-membrane anchored protein (residues 24-350) is internalized into human epithelial cells by hijacking the endosome recycling pathway and may be recycled back to the cell surface, which might aid transcellular trafficking of the bacteria. A bacterial cell surface protein; antisera against this protein induce complement-mediated killing of this and other strains. This is Neisseria adhesin A from Neisseria meningitidis serogroup B.